The chain runs to 81 residues: Putative membrane protein insertion efficiency factor (81 aa).

Belongs to the UPF0161 family.

Its subcellular location is the cell inner membrane. Functionally, could be involved in insertion of integral membrane proteins into the membrane. This chain is Putative membrane protein insertion efficiency factor, found in Pseudomonas syringae pv. syringae (strain B728a).